A 314-amino-acid polypeptide reads, in one-letter code: tRNA dimethylallyltransferase (314 aa).

Residue 12 to 19 (GPTASGKT) participates in ATP binding. 14–19 (TASGKT) contacts substrate. 2 interaction with substrate tRNA regions span residues 37–40 (DSAL) and 162–166 (QRIIR).

This sequence belongs to the IPP transferase family. In terms of assembly, monomer. The cofactor is Mg(2+).

It catalyses the reaction adenosine(37) in tRNA + dimethylallyl diphosphate = N(6)-dimethylallyladenosine(37) in tRNA + diphosphate. Its function is as follows. Catalyzes the transfer of a dimethylallyl group onto the adenine at position 37 in tRNAs that read codons beginning with uridine, leading to the formation of N6-(dimethylallyl)adenosine (i(6)A). In Acinetobacter baumannii (strain SDF), this protein is tRNA dimethylallyltransferase.